A 62-amino-acid chain; its full sequence is MDVNASKVDPKLLELLVCPLTKGRLSYDPEANELVSEKARLAYPIRDGVPIMLISEARKIEE.

This sequence belongs to the UPF0434 family.

This is UPF0434 protein Smed_3047 from Sinorhizobium medicae (strain WSM419) (Ensifer medicae).